The chain runs to 444 residues: Orexin receptor type 2 (444 aa).

Basic and acidic residues predominate over residues 1–10; the sequence is MSGTKLEDSP. Positions 1 to 30 are disordered; it reads MSGTKLEDSPPCRNWSSAPELNETQEPFLN. Residues 1–54 are Extracellular-facing; it reads MSGTKLEDSPPCRNWSSAPELNETQEPFLNPTDYDDEEFLRYLWREYLHPKEYE. Residues Asn-14 and Asn-22 are each glycosylated (N-linked (GlcNAc...) asparagine). Residues 14–27 show a composition bias toward polar residues; it reads NWSSAPELNETQEP. Residues 33–49 form a required for response to orexin-A region; sequence DYDDEEFLRYLWREYLH. The chain crosses the membrane as a helical span at residues 55–75; sequence WVLIAGYIIVFVVALIGNVLV. The Cytoplasmic portion of the chain corresponds to 76 to 88; sequence CVAVWKNHHMRTV. A helical transmembrane segment spans residues 89-110; that stretch reads TNYFIVNLSLADVLVTITCLPA. Residues 111–127 lie on the Extracellular side of the membrane; the sequence is TLVVDITETWFFGQSLC. Cys-127 and Cys-210 are oxidised to a cystine. The chain crosses the membrane as a helical span at residues 128-150; that stretch reads KVIPYLQTVSVSVSVLTLSCIAL. Residues 151 to 170 are Cytoplasmic-facing; that stretch reads DRWYAICHPLMFKSTAKRAR. The chain crosses the membrane as a helical span at residues 171–191; the sequence is NSIVIIWIVSCIIMIPQAIVM. Residues 192–222 are Extracellular-facing; sequence ECSTMLPGLANKTTLFTVCDERWGGEIYPKM. N-linked (GlcNAc...) asparagine glycosylation occurs at Asn-202. Residues 223–243 form a helical membrane-spanning segment; sequence YHICFFLVTYMAPLCLMVLAY. Topologically, residues 244–304 are cytoplasmic; it reads LQIFRKLWCR…QIRARRKTAR (61 aa). A helical membrane pass occupies residues 305–326; that stretch reads MLMVVLLVFAICYLPISILNVL. At 327–342 the chain is on the extracellular side; that stretch reads KRVFGMFTHTEDRETV. A helical membrane pass occupies residues 343-366; the sequence is YAWFTFSHWLVYANSAANPIIYNF. Residues 367-444 lie on the Cytoplasmic side of the membrane; it reads LSGKFREEFK…ANGAGQLQNW (78 aa).

This sequence belongs to the G-protein coupled receptor 1 family.

It localises to the cell membrane. Functionally, nonselective, high-affinity receptor for both orexin-A and orexin-B neuropeptides. Triggers an increase in cytoplasmic Ca(2+) levels in response to orexin-A binding. This chain is Orexin receptor type 2 (HCRTR2), found in Sus scrofa (Pig).